Here is a 506-residue protein sequence, read N- to C-terminus: Glutamate--tRNA ligase (506 aa).

The short motif at Pro12–Thr22 is the 'HIGH' region element. Residues Lys253–Arg257 carry the 'KMSKS' region motif. Lys256 serves as a coordination point for ATP.

It belongs to the class-I aminoacyl-tRNA synthetase family. Glutamate--tRNA ligase type 1 subfamily. As to quaternary structure, monomer.

Its subcellular location is the cytoplasm. It catalyses the reaction tRNA(Glu) + L-glutamate + ATP = L-glutamyl-tRNA(Glu) + AMP + diphosphate. In terms of biological role, catalyzes the attachment of glutamate to tRNA(Glu) in a two-step reaction: glutamate is first activated by ATP to form Glu-AMP and then transferred to the acceptor end of tRNA(Glu). This chain is Glutamate--tRNA ligase, found in Chlamydia trachomatis serovar L2 (strain ATCC VR-902B / DSM 19102 / 434/Bu).